A 537-amino-acid chain; its full sequence is MENSIGLGLIHGLMYGIVPVAPWFVALKRYLLEGKEKGQLAVAGTIAGQVTLLALTFFGWSRVLWVWYYFEPALIILGTMAVVRCALDCWVEQESSLRTAALGPGAGQLASKQEGLYYFLMSFGLMFCNPLHLEGSQTLLSSIPGNRYVYLLAFTVSYTAIIFIFWVTLGYRIFGKAYSGFGAQQTLNRYRIRRVSVGIVAALFLQFANCTPEALVIYHWDSLLAYTPFDGLKHHRTRGYTWEPSSDNAFELSRQSYRATNRAGVSFEQGAKRAVQFKPFWNTETRFDECNQVRERELSNEDWNAEATFHEFQGINQGVLRARSVPFNLYMVPNWEKQEDKNYLLTLRQIRDEMDDKLMAESSPQERFLVSPFTDNLDYEVDYQVYPELMAEKAQTKTAYADMVKLIRGTKWTSNHVHLGDGTDVEMSYAKLHALPAEVRLPWHYPVVKPTEVVVQTSSTDTPDSVQLLNDELQENLHFFSNEPERIQQNVYKRLWEHRTFGKVTPRMIDDKVQKRLDDRVNMRREAYVSSNPTKAK.

Transmembrane regions (helical) follow at residues 5-25 (IGLGLIHGLMYGIVPVAPWFV), 40-60 (LAVAGTIAGQVTLLALTFFGW), 63-83 (VLWVWYYFEPALIILGTMAVV), 115-135 (GLYYFLMSFGLMFCNPLHLEG), 149-169 (VYLLAFTVSYTAIIFIFWVTL), and 197-217 (VGIVAALFLQFANCTPEALVI).

It localises to the plastid. It is found in the chloroplast membrane. This is an uncharacterized protein from Ostreococcus tauri.